The primary structure comprises 440 residues: Transposon Ty1-GR2 Gag polyprotein (440 aa).

Residues 1–16 are compositionally biased toward low complexity; it reads MESQQLSQHSHISHGS. Disordered stretches follow at residues 1 to 93, 126 to 173, and 352 to 440; these read MESQ…MMTQ, PQSQ…RPPP, and GSRN…PGTY. Composition is skewed to polar residues over residues 48–60 and 127–152; these read TKANSQQTTTPAS and QSQFPQYPSSVGTPLSTPSPESGNTF. The span at 153-165 shows a compositional bias: low complexity; the sequence is TDSSSADSDMTST. Residues 299–401 are RNA-binding; that stretch reads NNGIHINNKV…NSKSKTARAH (103 aa). A compositionally biased stretch (low complexity) spans 402 to 418; the sequence is NVSTSNNSPSTDNDSIS. At serine 416 the chain carries Phosphoserine. Over residues 419 to 428 the composition is skewed to polar residues; sequence KSTTEPIQLN. The span at 429–440 shows a compositional bias: basic and acidic residues; that stretch reads NKHDLHLRPGTY.

As to quaternary structure, homotrimer.

It localises to the cytoplasm. Its function is as follows. Capsid protein (CA) is the structural component of the virus-like particle (VLP), forming the shell that encapsulates the retrotransposons dimeric RNA genome. The particles are assembled from trimer-clustered units and there are holes in the capsid shells that allow for the diffusion of macromolecules. CA also has nucleocapsid-like chaperone activity, promoting primer tRNA(i)-Met annealing to the multipartite primer-binding site (PBS), dimerization of Ty1 RNA and initiation of reverse transcription. The sequence is that of Transposon Ty1-GR2 Gag polyprotein (TY1A-GR2) from Saccharomyces cerevisiae (strain ATCC 204508 / S288c) (Baker's yeast).